The chain runs to 473 residues: Mitochondrial distribution and morphology protein 10 (473 aa).

This sequence belongs to the MDM10 family. In terms of assembly, component of the ER-mitochondria encounter structure (ERMES) or MDM complex, composed of MMM1, MDM10, MDM12 and MDM34. Associates with the mitochondrial outer membrane sorting assembly machinery SAM(core) complex.

The protein localises to the mitochondrion outer membrane. Functionally, component of the ERMES/MDM complex, which serves as a molecular tether to connect the endoplasmic reticulum and mitochondria. Components of this complex are involved in the control of mitochondrial shape and protein biogenesis and may function in phospholipid exchange. MDM10 is involved in the late assembly steps of the general translocase of the mitochondrial outer membrane (TOM complex). Functions in the TOM40-specific route of the assembly of outer membrane beta-barrel proteins, including the association of TOM40 with the receptor TOM22 and small TOM proteins. Can associate with the SAM(core) complex as well as the MDM12-MMM1 complex, both involved in late steps of the major beta-barrel assembly pathway, that is responsible for biogenesis of all outer membrane beta-barrel proteins. May act as a switch that shuttles between both complexes and channels precursor proteins into the TOM40-specific pathway. Plays a role in mitochondrial morphology and in the inheritance of mitochondria. This is Mitochondrial distribution and morphology protein 10 from Candida albicans (strain WO-1) (Yeast).